Consider the following 238-residue polypeptide: Ribonuclease PH (238 aa).

Phosphate-binding positions include arginine 86 and 124 to 126 (GTR).

It belongs to the RNase PH family. Homohexameric ring arranged as a trimer of dimers.

The enzyme catalyses tRNA(n+1) + phosphate = tRNA(n) + a ribonucleoside 5'-diphosphate. Phosphorolytic 3'-5' exoribonuclease that plays an important role in tRNA 3'-end maturation. Removes nucleotide residues following the 3'-CCA terminus of tRNAs; can also add nucleotides to the ends of RNA molecules by using nucleoside diphosphates as substrates, but this may not be physiologically important. Probably plays a role in initiation of 16S rRNA degradation (leading to ribosome degradation) during starvation. This Serratia proteamaculans (strain 568) protein is Ribonuclease PH.